Consider the following 535-residue polypeptide: MAGTADCQEHVARPRRPNICRVLRRTGYGKCLICSLLLVLCFFYATYCHVKHEAYSGSQPLLIYQHGPCAQGYNFVPIVFGLMLYIVYLMECWHSRTKIINMKKVRVEDALDYITALRTSPPIVWWKSVCYHYTRKTRQVTRYRNGDAVSATQVYYERVNSHQAGSMFIYDTCGFRDISKSILEVEKFHVTRIRLTRSFVFANMQAATEFEQQRSRFFNDNETKDDYMEVREGMDLSDVGFVEEILAFNCPTPPWFLHPIVFWFFSILVLSWPLRIYTEWRTAVLSFQVVKLFGTHYLSPNSINYTGPLTRTSTMDTVELEALLRREQHFVVPSYSEVMLMQNTIANSNTNFPNLRFLEPVIQPRPLVNTTNEHIVLRNYGATDTENSEQSSTVIPRPPPLRVSRSMTFAEENNDENLGFLENGNRRNRAIPSRGTVPLRSLSIGGISAWSNGYREIGREDSQFLIEPDEPPPPYEVALRMCAPLYERLRRSISSRLASISHSSSKDLKSLTLKNNNGAANNNNNNNNENPEEQP.

3 consecutive transmembrane segments (helical) span residues 27 to 47 (GYGK…YATY), 73 to 93 (YNFV…MECW), and 254 to 274 (PWFL…SWPL). The interval 498–535 (ASISHSSSKDLKSLTLKNNNGAANNNNNNNNENPEEQP) is disordered. The span at 510-529 (SLTLKNNNGAANNNNNNNNE) shows a compositional bias: low complexity.

This sequence belongs to the TMEM151 family.

Its subcellular location is the membrane. In Caenorhabditis briggsae, this protein is Transmembrane protein 151 homolog.